We begin with the raw amino-acid sequence, 705 residues long: Polyribonucleotide nucleotidyltransferase (705 aa).

Positions 492 and 498 each coordinate Mg(2+). Residues 559–618 (PLMITMKVSPDKIRHIIGPGGKIINKIIDETGVEIDIDDDGSVYILAQDQESGNRAKEII) enclose the KH domain. The region spanning 628-696 (GDIYEGRVKK…ELGRINLSRK (69 aa)) is the S1 motif domain.

This sequence belongs to the polyribonucleotide nucleotidyltransferase family. Mg(2+) serves as cofactor.

It localises to the cytoplasm. It catalyses the reaction RNA(n+1) + phosphate = RNA(n) + a ribonucleoside 5'-diphosphate. Functionally, involved in mRNA degradation. Catalyzes the phosphorolysis of single-stranded polyribonucleotides processively in the 3'- to 5'-direction. This chain is Polyribonucleotide nucleotidyltransferase, found in Halothermothrix orenii (strain H 168 / OCM 544 / DSM 9562).